The chain runs to 291 residues: GCN5-related N-acetyltransferase 4, chloroplastic (291 aa).

Residues 1–61 (MRSTPLGTTA…PSQINSGACN (61 aa)) constitute a chloroplast transit peptide. In terms of domain architecture, N-acetyltransferase spans 76–280 (IVVREARLED…RFTFMMKLVN (205 aa)). Residues 199 to 201 (VAV) and 207 to 212 (RKGIAK) contribute to the acetyl-CoA site. The residue at position 217 (lysine 217) is an N6-acetyllysine. Acetyl-CoA-binding positions include 238 to 240 (NLG) and tyrosine 245. Tyrosine 245 (proton donor) is an active-site residue. An N6-acetyllysine mark is found at lysine 254 and lysine 265.

It belongs to the acetyltransferase family. GNAT subfamily. Oligomer. In terms of processing, autoacetylated at K-217, K-254 and K-265. In terms of tissue distribution, expressed in green tissues.

The protein resides in the plastid. Its subcellular location is the chloroplast. The enzyme catalyses an N-terminal L-alpha-aminoacyl-[protein] + acetyl-CoA = N-terminal N(alpha)-acetyl-L-alpha-aminoacyl-[protein] + CoA + H(+). It carries out the reaction L-lysyl-[protein] + acetyl-CoA = N(6)-acetyl-L-lysyl-[protein] + CoA + H(+). It catalyses the reaction N-terminal L-alanyl-[protein] + acetyl-CoA = N-terminal N(alpha)-acetyl-L-alanyl-[protein] + CoA + H(+). The catalysed reaction is N-terminal L-seryl-[protein] + acetyl-CoA = N-terminal N(alpha)-acetyl-L-seryl-[protein] + CoA + H(+). The enzyme catalyses N-terminal L-threonyl-[protein] + acetyl-CoA = N-terminal N(alpha)-acetyl-L-threonyl-[protein] + CoA + H(+). It carries out the reaction N-terminal L-methionyl-[protein] + acetyl-CoA = N-terminal N(alpha)-acetyl-L-methionyl-[protein] + CoA + H(+). It catalyses the reaction N-terminal L-valyl-[protein] + acetyl-CoA = N-terminal N(alpha)-acetyl-L-valyl-[protein] + CoA + H(+). The catalysed reaction is N-terminal glycyl-[protein] + acetyl-CoA = N-terminal N(alpha)-acetylglycyl-[protein] + CoA + H(+). Protein acetyltransferase with dual specificity triggering both N-alpha-acetylation (NTA), with a large spectrum of modified N-termini, including methionine, alanine, serine, threonine and to a lower extent glycine and valine as substrates, and epsilon-lysine acetylation (KA) of several plastid proteins. The protein is GCN5-related N-acetyltransferase 4, chloroplastic of Arabidopsis thaliana (Mouse-ear cress).